Here is a 199-residue protein sequence, read N- to C-terminus: LPICPSGSVNCQVSLGELFDRAVKLSHYIHFLSSEMFNEFDERYAQGRGFITKAVNGCHTASLTTPEDKEQAQQIHHEDLLNLVLGVLRSWNDPLLHLVTEVQRIKEAPDTILWKAVEIEEQNKRLLEGMEKIVGRVQPGDTGNEVYSRWSGLPSLQLADEDSRLFAFYNLLHCGRRDSHKIDNYLKLLKCRLIHDSNC.

3 disulfide bridges follow: Cys-4–Cys-11, Cys-58–Cys-174, and Cys-191–Cys-199.

This sequence belongs to the somatotropin/prolactin family.

Its subcellular location is the secreted. This Alligator mississippiensis (American alligator) protein is Prolactin-2.